The chain runs to 507 residues: Alkyl hydroperoxide reductase subunit F (507 aa).

207 to 222 provides a ligand contact to FAD; it reads DVLIVGGGPASGSAAI. A disulfide bridge links cysteine 335 with cysteine 338. 347 to 361 is a binding site for NAD(+); sequence DVAVIGGGNSGVEAA. 467–477 serves as a coordination point for FAD; it reads TNVPGIFAAGD.

It belongs to the class-II pyridine nucleotide-disulfide oxidoreductase family. In terms of assembly, homodimer. FAD is required as a cofactor.

Serves to protect the cell against DNA damage by alkyl hydroperoxides. It can use either NADH or NADPH as electron donor for direct reduction of redox dyes or of alkyl hydroperoxides when combined with the AhpC protein. This chain is Alkyl hydroperoxide reductase subunit F (ahpF), found in Staphylococcus epidermidis (strain ATCC 12228 / FDA PCI 1200).